The sequence spans 263 residues: uncharacterized protein (263 aa).

One copy of the WD repeat lies at 53 to 89 (SAVTASKFSPDGRWLVNLTDQGYVQLWDVHKGERVKT).

This is an uncharacterized protein from Deinococcus radiodurans (strain ATCC 13939 / DSM 20539 / JCM 16871 / CCUG 27074 / LMG 4051 / NBRC 15346 / NCIMB 9279 / VKM B-1422 / R1).